We begin with the raw amino-acid sequence, 195 residues long: Protein GrpE (195 aa).

This sequence belongs to the GrpE family. Homodimer.

It is found in the cytoplasm. Functionally, participates actively in the response to hyperosmotic and heat shock by preventing the aggregation of stress-denatured proteins, in association with DnaK and GrpE. It is the nucleotide exchange factor for DnaK and may function as a thermosensor. Unfolded proteins bind initially to DnaJ; upon interaction with the DnaJ-bound protein, DnaK hydrolyzes its bound ATP, resulting in the formation of a stable complex. GrpE releases ADP from DnaK; ATP binding to DnaK triggers the release of the substrate protein, thus completing the reaction cycle. Several rounds of ATP-dependent interactions between DnaJ, DnaK and GrpE are required for fully efficient folding. The sequence is that of Protein GrpE from Francisella tularensis subsp. holarctica (strain OSU18).